A 156-amino-acid chain; its full sequence is RNA pyrophosphohydrolase (156 aa).

A Nudix hydrolase domain is found at 6–148 (NYRPNVAAIV…KKNIYVRVIK (143 aa)). Residues 43–64 (GGIDKGESVKNALFRELKEEIG) carry the Nudix box motif.

The protein belongs to the Nudix hydrolase family. RppH subfamily. A divalent metal cation serves as cofactor.

Its function is as follows. Accelerates the degradation of transcripts by removing pyrophosphate from the 5'-end of triphosphorylated RNA, leading to a more labile monophosphorylated state that can stimulate subsequent ribonuclease cleavage. The chain is RNA pyrophosphohydrolase from Campylobacter jejuni subsp. jejuni serotype O:2 (strain ATCC 700819 / NCTC 11168).